A 396-amino-acid polypeptide reads, in one-letter code: ATP phosphoribosyltransferase regulatory subunit (396 aa).

Belongs to the class-II aminoacyl-tRNA synthetase family. HisZ subfamily. As to quaternary structure, heteromultimer composed of HisG and HisZ subunits.

It is found in the cytoplasm. Its pathway is amino-acid biosynthesis; L-histidine biosynthesis; L-histidine from 5-phospho-alpha-D-ribose 1-diphosphate: step 1/9. In terms of biological role, required for the first step of histidine biosynthesis. May allow the feedback regulation of ATP phosphoribosyltransferase activity by histidine. The chain is ATP phosphoribosyltransferase regulatory subunit from Cellvibrio japonicus (strain Ueda107) (Pseudomonas fluorescens subsp. cellulosa).